A 532-amino-acid polypeptide reads, in one-letter code: Protein PTST homolog 2, chloroplastic (532 aa).

The transit peptide at 1 to 71 (MVSINSGPIS…KPRKKSCCSR (71 aa)) directs the protein to the chloroplast. 4 disordered regions span residues 165–201 (QLPN…SRND), 256–292 (EVDG…SETW), 314–347 (SSGL…EDVN), and 367–388 (HSLR…TAGN). The segment covering 173 to 183 (EMDKTLNHGDL) has biased composition (basic and acidic residues). The span at 320 to 339 (VKKDDTKKDSGDSMNGKDRI) shows a compositional bias: basic and acidic residues. A coiled-coil region spans residues 389–454 (LENLSDDWEY…ASRALRLLRT (66 aa)).

As to quaternary structure, interacts with PTST3 and SS4. Interacts with MFP1; the interaction is essential for the initiation of starch granules biosynthesis in leaf chloroplasts, for the correct location of the process in the stromal spaces between the thylakoid membranes, and for the association of this protein with the thylakoid membranes. Interacts with PII1/MRC; the interaction is essential for the initiation of starch granules biosynthesis in leaf chloroplasts.

The protein localises to the plastid. The protein resides in the chloroplast. Its subcellular location is the chloroplast thylakoid membrane. Involved in starch granule initiation in leaf chloroplasts. Binds and delivers suitable maltooligosaccharide substrates to starch synthase 4 (SS4). The sequence is that of Protein PTST homolog 2, chloroplastic from Arabidopsis thaliana (Mouse-ear cress).